The primary structure comprises 194 residues: ATP-dependent Clp protease proteolytic subunit 1 (194 aa).

The active-site Nucleophile is the Ser98. His123 is an active-site residue.

It belongs to the peptidase S14 family. Fourteen ClpP subunits assemble into 2 heptameric rings which stack back to back to give a disk-like structure with a central cavity, resembling the structure of eukaryotic proteasomes.

The protein resides in the cytoplasm. The catalysed reaction is Hydrolysis of proteins to small peptides in the presence of ATP and magnesium. alpha-casein is the usual test substrate. In the absence of ATP, only oligopeptides shorter than five residues are hydrolyzed (such as succinyl-Leu-Tyr-|-NHMec, and Leu-Tyr-Leu-|-Tyr-Trp, in which cleavage of the -Tyr-|-Leu- and -Tyr-|-Trp bonds also occurs).. Its function is as follows. Cleaves peptides in various proteins in a process that requires ATP hydrolysis. Has a chymotrypsin-like activity. Plays a major role in the degradation of misfolded proteins. ClpXP1 is involved in the complete degradation of the Site-2 clipped anti-sigma-W factor RsiW. This results in the release of SigW and the transcription activation of the genes under the control of the sigma-W factor. The sequence is that of ATP-dependent Clp protease proteolytic subunit 1 from Halalkalibacterium halodurans (strain ATCC BAA-125 / DSM 18197 / FERM 7344 / JCM 9153 / C-125) (Bacillus halodurans).